Consider the following 537-residue polypeptide: Cytochrome P450 monooxygenase claR (537 aa).

The helical transmembrane segment at 23–43 threads the bilayer; it reads VVTITEVALGIITLYLLGSYI. Position 454 (cysteine 454) interacts with heme.

This sequence belongs to the cytochrome P450 family. The cofactor is heme.

It localises to the membrane. It carries out the reaction (2E)-geranylhydroquinone + reduced [NADPH--hemoprotein reductase] + O2 = wigandol + oxidized [NADPH--hemoprotein reductase] + 2 H2O + H(+). The protein operates within secondary metabolite biosynthesis; terpenoid biosynthesis. In terms of biological role, cytochrome P450 monooxygenase; part of the gene cluster that mediates the biosynthesis of clavilactone A, a meroterpenoid that features a unique benzo-fused ten-membered carbocyclic ring unit with an alpha,beta-epoxy-gamma-lactone moiety, forming an intriguing 10/5/3 tricyclic nested skeleton. ClaR, ClaS and ClaT are sufficient to produce clavilactone A. ClaR acts as a macrocyclase to catalyze the oxidative cyclization of the isopentenyl to the nonterpenoid moieties to form the benzo-fused macrocycle, leading to wigantol. The biosynthesis begins with the prenyltransferase claS that transfers geranyl pyrophosphate (GPP) to hydroquinone to produces geranylhydroquinone. The cytochrome P450 monooxygenase claR then catalyzes the diradical coupling reaction between the intramolecular hydroquinone and allyl moieties to form the benzo-fused ten-membered carbocyclic ring unit of wigantol. Finally the cytochrome P450 monooxygenase claT exquisitely and stereoselectively assembles the alpha,beta-epoxy-gamma-lactone moiety, producing clavilactone A via arnebinol A. This Ampulloclitocybe clavipes (Club foot) protein is Cytochrome P450 monooxygenase claR.